Reading from the N-terminus, the 468-residue chain is Cysteine--tRNA ligase (468 aa).

C29 provides a ligand contact to Zn(2+). The short motif at 31 to 41 (PTVYNYIHIGN) is the 'HIGH' region element. Zn(2+)-binding residues include C209, H234, and E238. The short motif at 266–270 (KMSKS) is the 'KMSKS' region element. K269 is an ATP binding site.

Belongs to the class-I aminoacyl-tRNA synthetase family. As to quaternary structure, monomer. It depends on Zn(2+) as a cofactor.

The protein resides in the cytoplasm. It carries out the reaction tRNA(Cys) + L-cysteine + ATP = L-cysteinyl-tRNA(Cys) + AMP + diphosphate. The sequence is that of Cysteine--tRNA ligase from Brevibacillus brevis (strain 47 / JCM 6285 / NBRC 100599).